The sequence spans 75 residues: Protein B (75 aa).

The sequence is that of Protein B from Dicentrarchus labrax (European seabass).